Consider the following 585-residue polypeptide: Aspartate--tRNA ligase (585 aa).

Residue Glu-173 participates in L-aspartate binding. The aspartate stretch occupies residues 197–200 (QTLK). Arg-219 serves as a coordination point for L-aspartate. Residues 219-221 (RDE) and Gln-228 contribute to the ATP site. L-aspartate is bound at residue His-446. Glu-480 lines the ATP pocket. An L-aspartate-binding site is contributed by Arg-487. 532–535 (GLDR) serves as a coordination point for ATP.

Belongs to the class-II aminoacyl-tRNA synthetase family. Type 1 subfamily. As to quaternary structure, homodimer.

The protein resides in the cytoplasm. The enzyme catalyses tRNA(Asp) + L-aspartate + ATP = L-aspartyl-tRNA(Asp) + AMP + diphosphate. Functionally, catalyzes the attachment of L-aspartate to tRNA(Asp) in a two-step reaction: L-aspartate is first activated by ATP to form Asp-AMP and then transferred to the acceptor end of tRNA(Asp). This chain is Aspartate--tRNA ligase, found in Parabacteroides distasonis (strain ATCC 8503 / DSM 20701 / CIP 104284 / JCM 5825 / NCTC 11152).